A 492-amino-acid polypeptide reads, in one-letter code: Aspartyl/glutamyl-tRNA(Asn/Gln) amidotransferase subunit B (492 aa).

Belongs to the GatB/GatE family. GatB subfamily. As to quaternary structure, heterotrimer of A, B and C subunits.

The enzyme catalyses L-glutamyl-tRNA(Gln) + L-glutamine + ATP + H2O = L-glutaminyl-tRNA(Gln) + L-glutamate + ADP + phosphate + H(+). It carries out the reaction L-aspartyl-tRNA(Asn) + L-glutamine + ATP + H2O = L-asparaginyl-tRNA(Asn) + L-glutamate + ADP + phosphate + 2 H(+). Its function is as follows. Allows the formation of correctly charged Asn-tRNA(Asn) or Gln-tRNA(Gln) through the transamidation of misacylated Asp-tRNA(Asn) or Glu-tRNA(Gln) in organisms which lack either or both of asparaginyl-tRNA or glutaminyl-tRNA synthetases. The reaction takes place in the presence of glutamine and ATP through an activated phospho-Asp-tRNA(Asn) or phospho-Glu-tRNA(Gln). The chain is Aspartyl/glutamyl-tRNA(Asn/Gln) amidotransferase subunit B from Dehalococcoides mccartyi (strain ATCC BAA-2266 / KCTC 15142 / 195) (Dehalococcoides ethenogenes (strain 195)).